A 2923-amino-acid chain; its full sequence is Cadherin EGF LAG seven-pass G-type receptor 2 (2923 aa).

The signal sequence occupies residues 1–31; it reads MRSPATGVPLPTPPPPLLLLLLLLLPPPLLG. The Extracellular portion of the chain corresponds to 32–2380; it reads DQVGPCRSLG…GEILPLKTLT (2349 aa). The segment at 154–198 is disordered; it reads PGLRAGERSPEESLGGRRKRNVNTAPQFQPPSYQATVPENQPAGT. The span at 158–168 shows a compositional bias: basic and acidic residues; the sequence is AGERSPEESLG. The segment covering 175–196 has biased composition (polar residues); that stretch reads VNTAPQFQPPSYQATVPENQPA. Cadherin domains follow at residues 182-289, 290-399, 400-505, 506-610, 611-712, 713-815, 816-921, 922-1023, and 1028-1146; these read QPPS…DPVF, EQQE…APQF, SEKR…APIF, VSTP…NPTF, TQPE…RPVF, QSSH…APQF, LRDS…PPVF, EQDE…PPVL, and ILFN…SPLL. Residues asparagine 486, asparagine 557, and asparagine 701 are each glycosylated (N-linked (GlcNAc...) asparagine). N-linked (GlcNAc...) asparagine glycosylation is found at asparagine 1036, asparagine 1076, asparagine 1182, and asparagine 1212. Positions 1228 to 1286 constitute an EGF-like 1; calcium-binding domain; sequence DDNICLREPCENYMRCVSVLRFDSSAPFIASSSVLFRPIHPVGGLRCRCPPGFTGDYCE. Disulfide bonds link cysteine 1232-cysteine 1243, cysteine 1237-cysteine 1274, cysteine 1276-cysteine 1285, cysteine 1292-cysteine 1303, cysteine 1297-cysteine 1312, cysteine 1314-cysteine 1323, cysteine 1332-cysteine 1343, cysteine 1337-cysteine 1353, and cysteine 1355-cysteine 1365. The EGF-like 2; calcium-binding domain occupies 1288–1324; that stretch reads EVDLCYSRPCGPHGRCRSREGGYTCLCRDGYTGEHCE. In terms of domain architecture, EGF-like 3; calcium-binding spans 1328-1366; it reads RSGRCTPGVCKNGGTCVNLLVGGFKCDCPSGDFEKPYCQ. Residues 1367–1571 enclose the Laminin G-like 1 domain; the sequence is VTTRSFPAHS…IANNGTVPGC (205 aa). N-linked (GlcNAc...) asparagine glycans are attached at residues asparagine 1501 and asparagine 1565. Intrachain disulfides connect cysteine 1545–cysteine 1571, cysteine 1578–cysteine 1589, cysteine 1583–cysteine 1598, and cysteine 1600–cysteine 1609. In terms of domain architecture, EGF-like 4; calcium-binding spans 1574–1610; that stretch reads KKNVCDSNTCHNGGTCVNQWDAFSCECPLGFGGKSCA. Residue asparagine 1591 is modified to (3R)-3-hydroxyasparagine. In terms of domain architecture, Laminin G-like 2 spans 1614–1791; that stretch reads ANPQHFLGSS…GESINVEQGC (178 aa). Asparagine 1741 is a glycosylation site (N-linked (GlcNAc...) asparagine). 14 disulfides stabilise this stretch: cysteine 1761–cysteine 1791, cysteine 1797–cysteine 1808, cysteine 1802–cysteine 1817, cysteine 1819–cysteine 1828, cysteine 1832–cysteine 1843, cysteine 1837–cysteine 1855, cysteine 1857–cysteine 1866, cysteine 1887–cysteine 1899, cysteine 1889–cysteine 1906, cysteine 1908–cysteine 1921, cysteine 1924–cysteine 1936, cysteine 1926–cysteine 1943, cysteine 1945–cysteine 1954, and cysteine 1957–cysteine 1969. The 36-residue stretch at 1793 to 1828 folds into the EGF-like 5; calcium-binding domain; the sequence is LPDPCDSNPCPANSYCSNDWDSYSCSCDPGYYGDNC. A (3R)-3-hydroxyasparagine modification is found at asparagine 1810. Asparagine 1827 is a glycosylation site (N-linked (GlcNAc...) asparagine). Residues 1829–1867 form the EGF-like 6; calcium-binding domain; sequence TNVCDLNPCEHQSVCTRKPSAPHGYTCECPPNYLGPYCE. Positions 1883 to 1922 constitute an EGF-like 7; calcium-binding domain; the sequence is TCGPCNCDVSKGFDPDCNKTSGECHCKENHYRPPGSPTCL. Residue asparagine 1900 is glycosylated (N-linked (GlcNAc...) asparagine). The 48-residue stretch at 1924 to 1971 folds into the Laminin EGF-like domain; that stretch reads CDCYPTGSLSRVCDPEDGQCPCKPGVIGRQCDRCDNPFAEVTTNGCEV. N-linked (GlcNAc...) asparagine glycosylation is found at asparagine 2024, asparagine 2043, and asparagine 2061. Residues 2199–2369 form the GAIN-B domain; it reads ETTVILPESV…AVLMDVSRRE (171 aa). A disordered region spans residues 2213-2238; sequence PPVVRPAGPGEAQEPEELARRQRRHP. 2 cysteine pairs are disulfide-bonded: cysteine 2319-cysteine 2351 and cysteine 2339-cysteine 2353. The GPS stretch occupies residues 2319–2369; it reads CVFWNHSILVSGTGGWSARGCEVVFRNESHVSCQCNHMTSFAVLMDVSRRE. Asparagine 2323 and asparagine 2345 each carry an N-linked (GlcNAc...) asparagine glycan. The helical transmembrane segment at 2381–2401 threads the bilayer; it reads YVALGVTLAALLLTFFFLTLL. The Cytoplasmic portion of the chain corresponds to 2402–2416; that stretch reads RILRSNQHGIRRNLT. The helical transmembrane segment at 2417-2437 threads the bilayer; sequence AALGLAQLVFLLGINQADLPF. Residue alanine 2438 is a topological domain, extracellular. A helical transmembrane segment spans residues 2439–2459; sequence CTVIAILLHFLYLCTFSWALL. The Cytoplasmic segment spans residues 2460–2480; the sequence is EALHLYRALTEVRDVNTGPMR. The helical transmembrane segment at 2481–2501 threads the bilayer; sequence FYYMLGWGVPAFITGLAVGLD. The Extracellular segment spans residues 2502–2519; that stretch reads PEGYGNPDFCWLSIYDTL. A helical membrane pass occupies residues 2520–2540; it reads IWSFAGPVAFAVSMSVFLYIL. Residues 2541–2560 lie on the Cytoplasmic side of the membrane; the sequence is AARASCAAQRQGFEKKGPVS. Residues 2561 to 2581 traverse the membrane as a helical segment; sequence GLQPSFAVLLLLSATWLLALL. Residues 2582 to 2591 lie on the Extracellular side of the membrane; it reads SVNSDTLLFH. The chain crosses the membrane as a helical span at residues 2592 to 2612; sequence YLFATCNCIQGPFIFLSYVVL. The Cytoplasmic segment spans residues 2613 to 2923; sequence SKEVRKALKL…SEFLFFNFLH (311 aa). 2 disordered regions span residues 2688–2838 and 2854–2888; these read SALN…HKGI and LRLP…RQSL. Acidic residues-rich tracts occupy residues 2718 to 2730 and 2742 to 2753; these read TDSD…EDDQ and SEEEEEEEEEEA. Residues 2807 to 2819 show a composition bias toward basic and acidic residues; that stretch reads PEERLRENGDALS. Residues 2863-2873 show a composition bias toward low complexity; it reads GSSRGSSASEG.

This sequence belongs to the G-protein coupled receptor 2 family. LN-TM7 subfamily. As to quaternary structure, heterodimer of 2 chains generated by proteolytic processing; the large extracellular N-terminal fragment and the membrane-bound C-terminal fragment predominantly remain associated and non-covalently linked. Post-translationally, the iron and 2-oxoglutarate dependent 3-hydroxylation of aspartate and asparagine is (R) stereospecific within EGF domains. In terms of processing, autoproteolytically processed at the GPS region of the GAIN-B domain; this cleavage modulates receptor activity. Highest expression in brain and testis.

The protein resides in the cell membrane. In terms of biological role, receptor that may have an important role in cell/cell signaling during nervous system formation. This chain is Cadherin EGF LAG seven-pass G-type receptor 2, found in Homo sapiens (Human).